The sequence spans 150 residues: uncharacterized protein (150 aa).

This is an uncharacterized protein from Aquifex aeolicus (strain VF5).